A 177-amino-acid chain; its full sequence is RNA pyrophosphohydrolase (177 aa).

The region spanning 6 to 149 is the Nudix hydrolase domain; it reads GYRPNVGIVI…KRDVYRRVMK (144 aa). The Nudix box signature appears at 38-59; that stretch reads GGINPGESAEQAMYRELFEEVG.

Belongs to the Nudix hydrolase family. RppH subfamily. The cofactor is a divalent metal cation.

Functionally, accelerates the degradation of transcripts by removing pyrophosphate from the 5'-end of triphosphorylated RNA, leading to a more labile monophosphorylated state that can stimulate subsequent ribonuclease cleavage. In Cronobacter sakazakii (strain ATCC BAA-894) (Enterobacter sakazakii), this protein is RNA pyrophosphohydrolase.